The following is a 131-amino-acid chain: Small ribosomal subunit protein bS6 (131 aa).

The interval E98–E131 is disordered. The segment covering K104–F116 has biased composition (basic and acidic residues). The span at T120 to E131 shows a compositional bias: acidic residues.

Belongs to the bacterial ribosomal protein bS6 family.

Functionally, binds together with bS18 to 16S ribosomal RNA. The polypeptide is Small ribosomal subunit protein bS6 (Cronobacter sakazakii (strain ATCC BAA-894) (Enterobacter sakazakii)).